Here is a 273-residue protein sequence, read N- to C-terminus: Petrobactin import ATP-binding protein FpuD (273 aa).

Residues L5–E241 form the ABC transporter domain. G37–S44 contacts ATP.

Belongs to the ABC transporter superfamily. As to quaternary structure, the complex is composed of two ATP-binding proteins (FpuD), two transmembrane proteins (FpuB) and a solute-binding protein (FpuA).

Its subcellular location is the cell membrane. The catalysed reaction is a Fe(III)-siderophore(out) + ATP + H2O = a Fe(III)-siderophore(in) + ADP + phosphate + H(+). Functionally, part of an ABC transporter complex involved in ferric-petrobactin uptake. Probably responsible for energy coupling to the transport system. This Bacillus anthracis protein is Petrobactin import ATP-binding protein FpuD.